A 295-amino-acid chain; its full sequence is ATP synthase subunit a (295 aa).

The next 7 membrane-spanning stretches (helical) occupy residues 41–61, 101–121, 129–149, 161–181, 191–211, 222–242, and 244–264; these read KWSA…WLGF, YLTI…IPVA, IALP…VGIR, LVPA…IEFV, LAIR…VFAL, FVFG…ELMI, and VLQA…AISS.

It belongs to the ATPase A chain family. In terms of assembly, F-type ATPases have 2 components, CF(1) - the catalytic core - and CF(0) - the membrane proton channel. CF(1) has five subunits: alpha(3), beta(3), gamma(1), delta(1), epsilon(1). CF(0) has three main subunits: a(1), b(2) and c(9-12). The alpha and beta chains form an alternating ring which encloses part of the gamma chain. CF(1) is attached to CF(0) by a central stalk formed by the gamma and epsilon chains, while a peripheral stalk is formed by the delta and b chains.

The protein resides in the cell membrane. Key component of the proton channel; it plays a direct role in the translocation of protons across the membrane. In Parafrankia sp. (strain EAN1pec), this protein is ATP synthase subunit a.